Here is a 353-residue protein sequence, read N- to C-terminus: uncharacterized protein (353 aa).

The first 24 residues, 1-24 (MRVVKRIAVACYLGITIFSGIAFG), serve as a signal peptide directing secretion.

It belongs to the chlamydial CPn_1058/CT_355/TC_0634 family.

This is an uncharacterized protein from Chlamydia muridarum (strain MoPn / Nigg).